A 316-amino-acid polypeptide reads, in one-letter code: BTB/POZ domain-containing adapter for CUL3-mediated RhoA degradation protein 2 (316 aa).

The BTB domain maps to 28–96; it reads KYVQLNVGGS…LRDDTVTLPQ (69 aa). Positions 268–279 are enriched in polar residues; the sequence is EATSRSRSQASP. The tract at residues 268–287 is disordered; the sequence is EATSRSRSQASPSEDEDTFE. Residue serine 278 is modified to Phosphoserine. At serine 280 the chain carries Phosphoserine; by CK2.

Belongs to the BACURD family. Component of the BCR(TNFAIP1) E3 ubiquitin ligase complex, at least composed of CUL3, TNFAIP1/BACURD2 and RBX1. Interacts with RHOA; with a preference for RhoA-GDP. Interacts with RHOB. Interacts with CSNK2B. Interacts with PCNA. In terms of processing, phosphorylation at Ser-280 by CK2 facilitates the nucleus localization and increases interaction with PCNA.

Its subcellular location is the cytoplasm. It localises to the nucleus. The protein localises to the endosome. Its pathway is protein modification; protein ubiquitination. In terms of biological role, substrate-specific adapter of a BCR (BTB-CUL3-RBX1) E3 ubiquitin-protein ligase complex involved in regulation of cytoskeleton structure. The BCR(TNFAIP1) E3 ubiquitin ligase complex mediates the ubiquitination of RHOA, leading to its degradation by the proteasome, thereby regulating the actin cytoskeleton and cell migration. Its interaction with RHOB may regulate apoptosis. May enhance the PCNA-dependent DNA polymerase delta activity. This Rattus norvegicus (Rat) protein is BTB/POZ domain-containing adapter for CUL3-mediated RhoA degradation protein 2 (Tnfaip1).